A 1046-amino-acid chain; its full sequence is Piwi-like protein 2 (1046 aa).

Residues 1 to 12 (MDPKRPTFPSPP) are compositionally biased toward pro residues. The tract at residues 1–35 (MDPKRPTFPSPPGVIRAPWQQSTEDQSQLLDQPSL) is disordered. Residues 19 to 31 (WQQSTEDQSQLLD) are compositionally biased toward polar residues. The 114-residue stretch at 462–575 (SVLDVMNLIY…LLPELSFMTG (114 aa)) folds into the PAZ domain. In terms of domain architecture, Piwi spans 741-1032 (LVVCIMTGNR…LAFLSGQYLH (292 aa)). Residues Asp818, Glu856, Asp888, and His1021 contribute to the active site.

This sequence belongs to the argonaute family. Piwi subfamily. As to quaternary structure, component of the PET complex. Requires Mg(2+) as cofactor. In terms of processing, methylated on arginine residues; required for the interaction with Tudor domain-containing protein and subsequent localization to the meiotic nuage, also named P granule. In terms of tissue distribution, detected in primordial germ cells (PGCs) from 3 dpf. In adult, it is found in both the female and male gonad. In the ovary, it is present in all stages of germ cell differentiation. In testis, it is present in mitotic and meiotic germ cells. No protein has been detected in the fully differentiated sperm cell.

Its subcellular location is the cytoplasm. The protein resides in the nucleus. Its function is as follows. Endoribonuclease that plays a central role during spermatogenesis by repressing transposable elements and preventing their mobilization, which is essential for the germline integrity. Plays an essential role in germ cell differentiation and meiosis, independently of the function in transposable elements repression. Acts via the piRNA metabolic process, which mediates the repression of transposable elements during meiosis by forming complexes composed of piRNAs and Piwi proteins and govern the methylation and subsequent repression of transposons. During piRNA biosynthesis, plays a key role in the piRNA amplification loop, also named ping-pong amplification cycle, by acting as a 'slicer-competent' piRNA endoribonuclease that cleaves primary piRNAs, which are then loaded onto 'slicer-incompetent' piwil4. Piwil2 slicing produces a pre-miRNA intermediate, which is then processed in mature piRNAs, and as well as a 16 nucleotide by-product that is degraded. Required for piwil4/miwi2 nuclear localization and association with secondary piRNAs antisense. Represses circadian rhythms by promoting the stability and activity of core clock components BMAL1 and CLOCK. The polypeptide is Piwi-like protein 2 (piwil2) (Danio rerio (Zebrafish)).